Reading from the N-terminus, the 306-residue chain is Pantothenate kinase (306 aa).

91-98 (GSVAVGKS) contacts ATP.

The protein belongs to the prokaryotic pantothenate kinase family.

The protein localises to the cytoplasm. The catalysed reaction is (R)-pantothenate + ATP = (R)-4'-phosphopantothenate + ADP + H(+). Its pathway is cofactor biosynthesis; coenzyme A biosynthesis; CoA from (R)-pantothenate: step 1/5. This chain is Pantothenate kinase (coaA), found in Streptococcus pyogenes serotype M3 (strain ATCC BAA-595 / MGAS315).